The sequence spans 97 residues: Large ribosomal subunit protein uL23 (97 aa).

The protein belongs to the universal ribosomal protein uL23 family. Part of the 50S ribosomal subunit. Contacts protein L29, and trigger factor when it is bound to the ribosome.

Functionally, one of the early assembly proteins it binds 23S rRNA. One of the proteins that surrounds the polypeptide exit tunnel on the outside of the ribosome. Forms the main docking site for trigger factor binding to the ribosome. The sequence is that of Large ribosomal subunit protein uL23 from Marinobacter nauticus (strain ATCC 700491 / DSM 11845 / VT8) (Marinobacter aquaeolei).